Consider the following 103-residue polypeptide: Large ribosomal subunit protein bL21 (103 aa).

It belongs to the bacterial ribosomal protein bL21 family. In terms of assembly, part of the 50S ribosomal subunit. Contacts protein L20.

This protein binds to 23S rRNA in the presence of protein L20. This chain is Large ribosomal subunit protein bL21, found in Clostridium perfringens (strain ATCC 13124 / DSM 756 / JCM 1290 / NCIMB 6125 / NCTC 8237 / Type A).